The chain runs to 1950 residues: E3 ubiquitin-protein ligase UBR1 (1950 aa).

12 residues coordinate Zn(2+): His118, Cys123, Cys136, Cys139, Cys148, Cys151, His157, His160, His161, Cys175, Cys177, and Cys189. A UBR-type zinc finger spans residues 121 to 194 (RNCGRKFKIG…SPLHCKAEEQ (74 aa)). Ser296 and Ser300 each carry phosphoserine. Residues 678–681 (HVLH) are ubiquitin-binding loop. A Zn(2+)-binding site is contributed by Asp952. Residues 1165–1200 (KERKRRLAKKHQARLLAKFNNQQTKFMKEHESEFDE) are UBC2-binding region (U2BR). Zn(2+)-binding residues include Cys1220, Cys1223, Cys1295, His1297, His1300, Cys1303, Cys1320, and Cys1323. An RING-type; atypical zinc finger spans residues 1220–1324 (CALCQDSSST…SNAFICPLCQ (105 aa)). The interval 1333-1665 (LCQTSKANTG…YEYCGIIKLI (333 aa)) is cap helical domain (CHD). Zn(2+)-binding residues include Cys1703, Cys1706, His1722, Cys1727, His1763, and Asp1775. Disordered stretches follow at residues 1826–1846 (RPRR…GEDG) and 1893–1950 (TLQP…REIW). 2 stretches are compositionally biased toward acidic residues: residues 1833 to 1846 (TDED…GEDG) and 1934 to 1950 (DEDD…REIW). At Ser1938 the chain carries Phosphoserine.

Belongs to the E3 ubiquitin-protein ligase UBR1-like family. In terms of assembly, interacts with UBC2. Interacts with RPN2, RPT1 and RPT6 from the 26S proteasome.

The enzyme catalyses S-ubiquitinyl-[E2 ubiquitin-conjugating enzyme]-L-cysteine + [acceptor protein]-L-lysine = [E2 ubiquitin-conjugating enzyme]-L-cysteine + N(6)-ubiquitinyl-[acceptor protein]-L-lysine.. The protein operates within protein modification; protein ubiquitination. In terms of biological role, ubiquitin ligase protein which is a component of the N-end rule pathway. Recognizes and binds to proteins bearing specific N-terminal residues that are destabilizing according to the N-end rule, leading to their ubiquitination and subsequent degradation. Recognizes both type-1 and type-2 N-degrons, containing positively charged amino acids (Arg, Lys and His) and bulky and hydrophobic amino acids, respectively. The sequence is that of E3 ubiquitin-protein ligase UBR1 from Saccharomyces cerevisiae (strain ATCC 204508 / S288c) (Baker's yeast).